The sequence spans 462 residues: ATP synthase subunit beta (462 aa).

Position 151–158 (151–158 (GGAGVGKT)) interacts with ATP.

Belongs to the ATPase alpha/beta chains family. In terms of assembly, F-type ATPases have 2 components, CF(1) - the catalytic core - and CF(0) - the membrane proton channel. CF(1) has five subunits: alpha(3), beta(3), gamma(1), delta(1), epsilon(1). CF(0) has four main subunits: a(1), b(1), b'(1) and c(9-12).

Its subcellular location is the cell inner membrane. It carries out the reaction ATP + H2O + 4 H(+)(in) = ADP + phosphate + 5 H(+)(out). Produces ATP from ADP in the presence of a proton gradient across the membrane. The catalytic sites are hosted primarily by the beta subunits. In Chlorobium chlorochromatii (strain CaD3), this protein is ATP synthase subunit beta.